The following is a 124-amino-acid chain: MPTINQLVRKGRRDKTAKVKTAALKGSPQRRGVCTRVYTTTPKKPNSALRKVARVRLTTSVEVTAYIPGEGHNLQEHSMVLVRGGRVKDLPGVRYKIIRGSLDTQGVKGRKQARSRYGAKKEKS.

The disordered stretch occupies residues 1-32 (MPTINQLVRKGRRDKTAKVKTAALKGSPQRRG). Asp-89 carries the post-translational modification 3-methylthioaspartic acid. The disordered stretch occupies residues 104-124 (TQGVKGRKQARSRYGAKKEKS). Basic residues predominate over residues 108–118 (KGRKQARSRYG).

It belongs to the universal ribosomal protein uS12 family. Part of the 30S ribosomal subunit. Contacts proteins S8 and S17. May interact with IF1 in the 30S initiation complex.

With S4 and S5 plays an important role in translational accuracy. Its function is as follows. Interacts with and stabilizes bases of the 16S rRNA that are involved in tRNA selection in the A site and with the mRNA backbone. Located at the interface of the 30S and 50S subunits, it traverses the body of the 30S subunit contacting proteins on the other side and probably holding the rRNA structure together. The combined cluster of proteins S8, S12 and S17 appears to hold together the shoulder and platform of the 30S subunit. This chain is Small ribosomal subunit protein uS12, found in Rhodococcus erythropolis (strain PR4 / NBRC 100887).